The primary structure comprises 654 residues: DNA ligase (654 aa).

Residues 37–41 (DEEYD), 86–87 (SM), and Glu-113 each bind NAD(+). The active-site N6-AMP-lysine intermediate is the Lys-115. NAD(+)-binding residues include Arg-136, Glu-170, and Lys-308. Positions 402, 405, 418, and 423 each coordinate Zn(2+). In terms of domain architecture, BRCT spans 576–654 (ITQNAFSGKS…GEFERLKLEI (79 aa)).

The protein belongs to the NAD-dependent DNA ligase family. LigA subfamily. The cofactor is Mg(2+). Requires Mn(2+) as cofactor.

It carries out the reaction NAD(+) + (deoxyribonucleotide)n-3'-hydroxyl + 5'-phospho-(deoxyribonucleotide)m = (deoxyribonucleotide)n+m + AMP + beta-nicotinamide D-nucleotide.. Functionally, DNA ligase that catalyzes the formation of phosphodiester linkages between 5'-phosphoryl and 3'-hydroxyl groups in double-stranded DNA using NAD as a coenzyme and as the energy source for the reaction. It is essential for DNA replication and repair of damaged DNA. The polypeptide is DNA ligase (Campylobacter curvus (strain 525.92)).